We begin with the raw amino-acid sequence, 107 residues long: Cytochrome c-550 (107 aa).

4 residues coordinate heme c: Cys11, Cys14, His15, and Met80.

In terms of processing, binds 1 heme c group covalently per subunit.

The polypeptide is Cytochrome c-550 (Ancylobacter novellus (Thiobacillus novellus)).